A 384-amino-acid chain; its full sequence is Neuropeptide Y receptor type 2 (384 aa).

Residues 1–54 (MKMGPLGAEADENQTVEEMKVDQFGPGHTTLPGELAPDSEPELIDSTKLIEVQV) lie on the Extracellular side of the membrane. N-linked (GlcNAc...) asparagine glycosylation occurs at Asn-13. The chain crosses the membrane as a helical span at residues 55 to 75 (VLILAYCSIILLGVIGNSLVI). Residues 76–89 (HVVIKFKSMRTVTN) are Cytoplasmic-facing. The chain crosses the membrane as a helical span at residues 90–110 (FFIANLAVADLLVNTLCLPFT). Over 111–127 (LTYTLMGEWKMGPVLCH) the chain is Extracellular. Cys-126 and Cys-206 form a disulfide bridge. A helical membrane pass occupies residues 128–148 (LVPYAQGLAVQVSTITLTVIA). Residues 149 to 168 (LDRHRCIVYHLESKISKQIS) lie on the Cytoplasmic side of the membrane. A helical transmembrane segment spans residues 169 to 189 (FLIIGLAWGVSALLASPLAIF). The Extracellular portion of the chain corresponds to 190-219 (REYSLIEIIPDFEIVACTEKWPGEEKGIYG). A helical membrane pass occupies residues 220 to 240 (TIYSLSSLLILYVLPLGIISF). Residues 241–271 (SYTRIWSKLKNHVSPGAAHDHYHQRRQKTTK) lie on the Cytoplasmic side of the membrane. A helical membrane pass occupies residues 272 to 292 (MLVCVVVVFAVSWLPLHAFQL). The Extracellular portion of the chain corresponds to 293 to 307 (AVDIDSHVLDLKEYK). Residues 308 to 328 (LIFTVFHIIAMCSTFANPLLY) traverse the membrane as a helical segment. At 329 to 384 (GWMNSNYRKAFLSAFRCEQRLDAIHSEVSVTFKAKKHLQVTKNNGPNDSFTETTNV) the chain is on the cytoplasmic side. A lipid anchor (S-palmitoyl cysteine) is attached at Cys-345.

Belongs to the G-protein coupled receptor 1 family.

It localises to the cell membrane. Functionally, receptor for neuropeptide Y and peptide YY. This is Neuropeptide Y receptor type 2 (NPY2R) from Bos taurus (Bovine).